The following is a 426-amino-acid chain: Adenylosuccinate synthetase (426 aa).

Residues 14-20 (GDEGKGK) and 42-44 (GHT) contribute to the GTP site. D15 acts as the Proton acceptor in catalysis. Residues D15 and G42 each coordinate Mg(2+). IMP contacts are provided by residues 15–18 (DEGK), 40–43 (NAGH), T130, R144, Q224, T239, and R303. H43 acts as the Proton donor in catalysis. 299-305 (TVTKRPR) serves as a coordination point for substrate. GTP-binding positions include R305, 331-333 (LID), and 413-415 (SVG).

The protein belongs to the adenylosuccinate synthetase family. In terms of assembly, homodimer. It depends on Mg(2+) as a cofactor.

The protein resides in the cytoplasm. It catalyses the reaction IMP + L-aspartate + GTP = N(6)-(1,2-dicarboxyethyl)-AMP + GDP + phosphate + 2 H(+). Its pathway is purine metabolism; AMP biosynthesis via de novo pathway; AMP from IMP: step 1/2. Plays an important role in the de novo pathway of purine nucleotide biosynthesis. Catalyzes the first committed step in the biosynthesis of AMP from IMP. This Malacoplasma penetrans (strain HF-2) (Mycoplasma penetrans) protein is Adenylosuccinate synthetase.